A 489-amino-acid polypeptide reads, in one-letter code: Protein MGF 505-2R (489 aa).

It belongs to the asfivirus MGF 505 family.

In terms of biological role, plays a role in virus cell tropism, and may be required for efficient virus replication in macrophages. This is Protein MGF 505-2R from Ornithodoros (relapsing fever ticks).